The chain runs to 349 residues: Nicotinate-nucleotide--dimethylbenzimidazole phosphoribosyltransferase (349 aa).

Residue Glu315 is the Proton acceptor of the active site.

Belongs to the CobT family.

The catalysed reaction is 5,6-dimethylbenzimidazole + nicotinate beta-D-ribonucleotide = alpha-ribazole 5'-phosphate + nicotinate + H(+). The protein operates within nucleoside biosynthesis; alpha-ribazole biosynthesis; alpha-ribazole from 5,6-dimethylbenzimidazole: step 1/2. Its function is as follows. Catalyzes the synthesis of alpha-ribazole-5'-phosphate from nicotinate mononucleotide (NAMN) and 5,6-dimethylbenzimidazole (DMB). This chain is Nicotinate-nucleotide--dimethylbenzimidazole phosphoribosyltransferase, found in Variovorax paradoxus (strain S110).